A 316-amino-acid chain; its full sequence is Apolipoprotein E (316 aa).

Residues 1–18 (MKALWAVLVVTLLAGCLA) form the signal peptide. 8 tandem repeats follow at residues 76–97 (VLMEDTMTELKAYKKELEEQLG), 98–119 (PMAEETRARLAKEVQAAQSRLG), 120–141 (ADMEDLRNRLGQYRNEVQTMLG), 142–163 (QSTEELRARLSTHLRKLRKRLM), 164–185 (RDAEDLQKRLAVYKAGAREGAE), 186–207 (RGVGAIRERLGPLVEQGRQRTA), 208–229 (NLGAGAGKPLQDRAQALGARIR), and 230–251 (GRLEEVGNQARDRLEEVREQME). The 8 X 22 AA approximate tandem repeats stretch occupies residues 76–251 (VLMEDTMTEL…RLEEVREQME (176 aa)). Residue methionine 139 is modified to Methionine sulfoxide. Serine 143 carries the phosphoserine modification. Positions 154–164 (HLRKLRKRLMR) are LDL and other lipoprotein receptors binding. 158 to 161 (LRKR) provides a ligand contact to heparin. The segment at 206–286 (TANLGAGAGK…GWFEPLVEDM (81 aa)) is lipid-binding and lipoprotein association. Heparin is bound at residue 225 to 232 (GARIRGRL). The segment at 262-316 (QQMRLQAEIFQARLKGWFEPLVEDMQRQWANLVEKIQASVAANPIPPSSVPQESQ) is homooligomerization. Positions 274 to 286 (RLKGWFEPLVEDM) are specificity for association with VLDL.

This sequence belongs to the apolipoprotein A1/A4/E family. In terms of assembly, homotetramer. May interact with ABCA1; functionally associated with ABCA1 in the biogenesis of HDLs. May interact with APP/A4 amyloid-beta peptide; the interaction is extremely stable in vitro but its physiological significance is unclear. May interact with MAPT. May interact with MAP2. In the cerebrospinal fluid, interacts with secreted SORL1. Interacts with PMEL; this allows the loading of PMEL luminal fragment on ILVs to induce fibril nucleation. In terms of processing, APOE exists as multiple glycosylated and sialylated glycoforms within cells and in plasma. The extent of glycosylation and sialylation are tissue and context specific. Glycated in plasma VLDL. Post-translationally, phosphorylated by FAM20C in the extracellular medium.

Its subcellular location is the secreted. The protein localises to the extracellular space. It is found in the extracellular matrix. It localises to the extracellular vesicle. The protein resides in the endosome. Its subcellular location is the multivesicular body. APOE is an apolipoprotein, a protein associating with lipid particles, that mainly functions in lipoprotein-mediated lipid transport between organs via the plasma and interstitial fluids. APOE is a core component of plasma lipoproteins and is involved in their production, conversion and clearance. Apolipoproteins are amphipathic molecules that interact both with lipids of the lipoprotein particle core and the aqueous environment of the plasma. As such, APOE associates with chylomicrons, chylomicron remnants, very low density lipoproteins (VLDL) and intermediate density lipoproteins (IDL) but shows a preferential binding to high-density lipoproteins (HDL). It also binds a wide range of cellular receptors including the LDL receptor/LDLR, the LDL receptor-related proteins LRP1, LRP2 and LRP8 and the very low-density lipoprotein receptor/VLDLR that mediate the cellular uptake of the APOE-containing lipoprotein particles. Finally, APOE also has a heparin-binding activity and binds heparan-sulfate proteoglycans on the surface of cells, a property that supports the capture and the receptor-mediated uptake of APOE-containing lipoproteins by cells. A main function of APOE is to mediate lipoprotein clearance through the uptake of chylomicrons, VLDLs, and HDLs by hepatocytes. APOE is also involved in the biosynthesis by the liver of VLDLs as well as their uptake by peripheral tissues ensuring the delivery of triglycerides and energy storage in muscle, heart and adipose tissues. By participating in the lipoprotein-mediated distribution of lipids among tissues, APOE plays a critical role in plasma and tissues lipid homeostasis. APOE is also involved in two steps of reverse cholesterol transport, the HDLs-mediated transport of cholesterol from peripheral tissues to the liver, and thereby plays an important role in cholesterol homeostasis. First, it is functionally associated with ABCA1 in the biogenesis of HDLs in tissues. Second, it is enriched in circulating HDLs and mediates their uptake by hepatocytes. APOE also plays an important role in lipid transport in the central nervous system, regulating neuron survival and sprouting. The chain is Apolipoprotein E (Apoe) from Onychomys torridus (Southern grasshopper mouse).